We begin with the raw amino-acid sequence, 404 residues long: Glycerol-1-phosphate dehydrogenase [NAD(P)+] (404 aa).

NAD(+) contacts are provided by residues Asp56, 118-122, and 140-143; these read GTIHD and TAPS. Asp145 contributes to the substrate binding site. Ser149 provides a ligand contact to NAD(+). Asp192 contacts substrate. Positions 192 and 272 each coordinate Ni(2+). Substrate is bound at residue His276. His292 lines the Ni(2+) pocket.

It belongs to the glycerol-1-phosphate dehydrogenase family. As to quaternary structure, homodimer. Ni(2+) serves as cofactor.

Its subcellular location is the cytoplasm. It carries out the reaction sn-glycerol 1-phosphate + NAD(+) = dihydroxyacetone phosphate + NADH + H(+). The catalysed reaction is sn-glycerol 1-phosphate + NADP(+) = dihydroxyacetone phosphate + NADPH + H(+). Its function is as follows. Catalyzes the NAD(P)H-dependent reduction of dihydroxyacetonephosphate (DHAP or glycerone phosphate) to glycerol 1-phosphate (G1P). The G1P thus generated is probably used for the synthesis of phosphoglycerolipids in Gram-positive bacterial species. This Geobacillus stearothermophilus (Bacillus stearothermophilus) protein is Glycerol-1-phosphate dehydrogenase [NAD(P)+].